The sequence spans 112 residues: Frizzy aggregation protein FrzB (112 aa).

In terms of biological role, necessary for proper aggregation of cells to form fruiting bodies. FRZ genes define a system of signal transduction analogous to the enterobacterial chemotaxis systems. In Myxococcus xanthus, this protein is Frizzy aggregation protein FrzB (frzB).